Reading from the N-terminus, the 271-residue chain is uncharacterized protein (271 aa).

It belongs to the anhydro-N-acetylmuramic acid kinase family.

This is an uncharacterized protein from Yersinia enterocolitica.